Consider the following 71-residue polypeptide: MKQSIIIALFATIAVMACLQMVAAVPAPVPEAAPGPVAEAEAYASPEALASPEAEPILGIITSLLKSLGKK.

An N-terminal signal peptide occupies residues 1 to 24; it reads MKQSIIIALFATIAVMACLQMVAA. 5 AXPX repeats span residues 24-27, 32-35, 44-47, 50-53, and 54-57; these read AVPA, AAPG, ASPE, and AEPI. A propeptide spanning residues 25-54 is cleaved from the precursor; it reads VPAPVPEAAPGPVAEAEAYASPEALASPEA. Position 68 is a leucine amide (Leu68).

It belongs to the MCD family. Protonectin subfamily. In terms of tissue distribution, expressed by the venom gland.

The protein localises to the secreted. Its subcellular location is the target cell membrane. Antimicrobial peptide with strong activity against the fungus B.cinerea (MIC=0.5 ug/ml), and poor activities against the fungus C.albicans (MIC=100 ug/ml), the Gram-positive bacterium S.aureus (MIC=125 ug/ml) and the Gram-negative bacterium E.coli (MIC=125 ug/ml). Functionally, antimicrobial peptide with strong activity against the fungus B.cinerea (MIC=0.4 uM), and poor activities against the fungus C.albicans (MIC=16 uM), the Gram-positive bacterium S.aureus (MIC=20 uM) and the Gram-negative bacterium E.coli (MIC=79 uM). Shows cytolytic activity against insect cell lines. Has potent hemolytic activity against ovine erythrocytes. Has potent hemolytic activity against human erythrocytes (EC(50)=31 uM). In vivo, peptide injection in the vicinity of the head and thorax of lepidopteran larvae induces feeding disorder followed by death due to starvation. This chain is Venom peptide 2-long, found in Orancistrocerus drewseni (Solitary wasp).